Here is a 383-residue protein sequence, read N- to C-terminus: F-box/kelch-repeat protein At2g29830 (383 aa).

The interval 1–21 (MVVLSEIPGDPNEDNQNENPQ) is disordered. Residues 11–21 (PNEDNQNENPQ) show a composition bias toward acidic residues. An F-box domain is found at 27–73 (LPILLQLPEELIASIVALIPRCHYPSLSLVSRAFRHLITSQELYVAR). Kelch repeat units follow at residues 130-178 (KMYV…IIDG), 179-224 (RIYV…FITY), 226-272 (VMQG…VVGD), 274-317 (LYAL…YTST), and 324-370 (KLVI…RDLP).

This Arabidopsis thaliana (Mouse-ear cress) protein is F-box/kelch-repeat protein At2g29830.